The chain runs to 305 residues: UDP-3-O-acyl-N-acetylglucosamine deacetylase (305 aa).

3 residues coordinate Zn(2+): His-78, His-237, and Asp-241. His-264 functions as the Proton donor in the catalytic mechanism.

It belongs to the LpxC family. Zn(2+) is required as a cofactor.

The enzyme catalyses a UDP-3-O-[(3R)-3-hydroxyacyl]-N-acetyl-alpha-D-glucosamine + H2O = a UDP-3-O-[(3R)-3-hydroxyacyl]-alpha-D-glucosamine + acetate. It functions in the pathway glycolipid biosynthesis; lipid IV(A) biosynthesis; lipid IV(A) from (3R)-3-hydroxytetradecanoyl-[acyl-carrier-protein] and UDP-N-acetyl-alpha-D-glucosamine: step 2/6. Functionally, catalyzes the hydrolysis of UDP-3-O-myristoyl-N-acetylglucosamine to form UDP-3-O-myristoylglucosamine and acetate, the committed step in lipid A biosynthesis. The chain is UDP-3-O-acyl-N-acetylglucosamine deacetylase from Burkholderia cenocepacia (strain ATCC BAA-245 / DSM 16553 / LMG 16656 / NCTC 13227 / J2315 / CF5610) (Burkholderia cepacia (strain J2315)).